The sequence spans 405 residues: Glucan 1,3-beta-glucosidase A (405 aa).

The first 14 residues, 1–14 (MLPLLLCIVPYCWS), serve as a signal peptide directing secretion. Glutamate 199 functions as the Proton donor in the catalytic mechanism. 2 cysteine pairs are disulfide-bonded: cysteine 280–cysteine 405 and cysteine 306–cysteine 332. Glutamate 298 (nucleophile) is an active-site residue.

It belongs to the glycosyl hydrolase 5 (cellulase A) family. In terms of assembly, monomer. It depends on Mn(2+) as a cofactor.

It localises to the secreted. The catalysed reaction is Successive hydrolysis of beta-D-glucose units from the non-reducing ends of (1-&gt;3)-beta-D-glucans, releasing alpha-glucose.. Functionally, beta-glucanases participate in the metabolism of beta-glucan, the main structural component of the cell wall. It could also function biosynthetically as a transglycosylase. The polypeptide is Glucan 1,3-beta-glucosidase A (exgA) (Aspergillus oryzae (strain ATCC 42149 / RIB 40) (Yellow koji mold)).